We begin with the raw amino-acid sequence, 389 residues long: Mitochondrial tRNA-specific 2-thiouridylase 1 (389 aa).

ATP is bound by residues 8 to 15 (GVSGGVDS) and methionine 34. The tract at residues 94–96 (NPD) is interaction with target base in tRNA. The active-site Nucleophile is the cysteine 99. Cysteine 99 and cysteine 205 are joined by a disulfide. Residue glycine 124 participates in ATP binding. The segment at 154–156 (KDQ) is interaction with tRNA. Cysteine 205 functions as the Cysteine persulfide intermediate in the catalytic mechanism. The tract at residues 317 to 318 (QH) is interaction with tRNA.

Belongs to the MnmA/TRMU family.

It is found in the mitochondrion. It catalyses the reaction 5-taurinomethyluridine(34) in tRNA + S-sulfanyl-L-cysteinyl-[protein] + AH2 + ATP = 5-taurinomethyl-2-thiouridine(34) in tRNA + L-cysteinyl-[protein] + A + AMP + diphosphate + H(+). Its function is as follows. Catalyzes the 2-thiolation of uridine at the wobble position (U34) of mitochondrial tRNA(Lys), tRNA(Glu) and tRNA(Gln). Required for the formation of 5-taurinomethyl-2-thiouridine (tm5s2U) of mitochondrial tRNA(Lys), tRNA(Glu), and tRNA(Gln) at the wobble position. ATP is required to activate the C2 atom of the wobble base. The sequence is that of Mitochondrial tRNA-specific 2-thiouridylase 1 from Drosophila melanogaster (Fruit fly).